Here is a 465-residue protein sequence, read N- to C-terminus: Cysteine--tRNA ligase (465 aa).

Cysteine 29 serves as a coordination point for Zn(2+). The short motif at 31–41 (ITPYDEVHLGH) is the 'HIGH' region element. Residues cysteine 212, histidine 237, and glutamate 241 each contribute to the Zn(2+) site. The short motif at 269–273 (KMSKS) is the 'KMSKS' region element. Position 272 (lysine 272) interacts with ATP.

Belongs to the class-I aminoacyl-tRNA synthetase family. As to quaternary structure, monomer. Zn(2+) serves as cofactor.

It localises to the cytoplasm. It catalyses the reaction tRNA(Cys) + L-cysteine + ATP = L-cysteinyl-tRNA(Cys) + AMP + diphosphate. This chain is Cysteine--tRNA ligase, found in Endomicrobium trichonymphae.